We begin with the raw amino-acid sequence, 167 residues long: SsrA-binding protein (167 aa).

The tract at residues 139–167 (QAHDKRHAEKEREWQRDKQRIMRAHNRNA) is disordered. Basic and acidic residues predominate over residues 144 to 158 (RHAEKEREWQRDKQR).

It belongs to the SmpB family.

It localises to the cytoplasm. Functionally, required for rescue of stalled ribosomes mediated by trans-translation. Binds to transfer-messenger RNA (tmRNA), required for stable association of tmRNA with ribosomes. tmRNA and SmpB together mimic tRNA shape, replacing the anticodon stem-loop with SmpB. tmRNA is encoded by the ssrA gene; the 2 termini fold to resemble tRNA(Ala) and it encodes a 'tag peptide', a short internal open reading frame. During trans-translation Ala-aminoacylated tmRNA acts like a tRNA, entering the A-site of stalled ribosomes, displacing the stalled mRNA. The ribosome then switches to translate the ORF on the tmRNA; the nascent peptide is terminated with the 'tag peptide' encoded by the tmRNA and targeted for degradation. The ribosome is freed to recommence translation, which seems to be the essential function of trans-translation. The polypeptide is SsrA-binding protein (Xylella fastidiosa (strain M23)).